The sequence spans 460 residues: DNA repair protein RadA (460 aa).

A C4-type zinc finger spans residues 11–28 (CNECGADYPRWQGQCSAC). 102–109 (GNPGAGKS) provides a ligand contact to ATP. The short motif at 258–262 (KNRFG) is the RadA KNRFG motif element. A lon-protease-like region spans residues 357-460 (DVFVNVVGGV…SDALSVFDDL (104 aa)).

The protein belongs to the RecA family. RadA subfamily.

Its function is as follows. DNA-dependent ATPase involved in processing of recombination intermediates, plays a role in repairing DNA breaks. Stimulates the branch migration of RecA-mediated strand transfer reactions, allowing the 3' invading strand to extend heteroduplex DNA faster. Binds ssDNA in the presence of ADP but not other nucleotides, has ATPase activity that is stimulated by ssDNA and various branched DNA structures, but inhibited by SSB. Does not have RecA's homology-searching function. Genetic experiments involving combination of radA mutations with mutations in recA, recB, recG, recJ, recQ, ruvA and ruvC show it plays a role in recombination and recombinational repair, probably involving stabilizing or processing branched DNA or blocked replication forks. Is genetically synergistic to RecG and RuvABC. May be involved in recovery of genetic rearrangements during replication fork breakdown. In combination with RadD is important in recovery from double-strand DNA breaks (DSB). The protein is DNA repair protein RadA of Escherichia coli (strain K12).